The following is a 215-amino-acid chain: 3-isopropylmalate dehydratase small subunit (215 aa).

Belongs to the LeuD family. LeuD type 1 subfamily. Heterodimer of LeuC and LeuD.

The catalysed reaction is (2R,3S)-3-isopropylmalate = (2S)-2-isopropylmalate. Its pathway is amino-acid biosynthesis; L-leucine biosynthesis; L-leucine from 3-methyl-2-oxobutanoate: step 2/4. Its function is as follows. Catalyzes the isomerization between 2-isopropylmalate and 3-isopropylmalate, via the formation of 2-isopropylmaleate. The sequence is that of 3-isopropylmalate dehydratase small subunit from Xanthomonas oryzae pv. oryzae (strain MAFF 311018).